Consider the following 221-residue polypeptide: Sugar transporter SWEET1 (221 aa).

A run of 7 helical transmembrane segments spans residues 3–23, 42–62, 68–88, 96–116, 129–149, 160–180, and 186–206; these read AGGF…LGMF, VQFL…SYGA, ILIV…LAYL, VVLL…GYFW, LGLF…ADLA, LSYP…LYGF, and YIMV…WLFW. Positions 10–94 constitute a MtN3/slv 1 domain; it reads LIYGACVVFT…LAYLHYCPRK (85 aa). One can recognise a MtN3/slv 2 domain in the interval 127 to 212; sequence QQLGLFCSVF…WLFWKYPQEQ (86 aa). The segment at 149 to 221 is mediates interaction with TRPV2; that stretch reads AKVIQTKSTQ…QDRNYWLLQT (73 aa).

The protein belongs to the SWEET sugar transporter family. In terms of assembly, interacts with TRPV2; the interaction probably occurs intracellularly and depends on TRPV2 N-glycosylation. In terms of tissue distribution, ubiquitously expressed with highest expression in oviduct, epididymis and intestine.

Its subcellular location is the golgi apparatus membrane. It is found in the cell membrane. Functionally, mediates sugar transport across membranes. May stimulate V(D)J recombination by the activation of RAG1. The polypeptide is Sugar transporter SWEET1 (SLC50A1) (Homo sapiens (Human)).